Reading from the N-terminus, the 599-residue chain is BICD family-like cargo adapter 1 (599 aa).

Residues 1–27 (MELPISFLSDSSRPAASSERGDQAALG) form a disordered region. The CC1 box motif lies at 76–80 (AARLG). Positions 80–341 (GKALLERNQD…WEAHCQVRSL (262 aa)) form a coiled coil. The disordered stretch occupies residues 352 to 375 (DSAVSTDSSMDESSETSSAKDVPA). Positions 405–536 (EDDGLEEQIK…LEAWQDDMHR (132 aa)) form a coiled coil.

Belongs to the BICDR family. In terms of assembly, part of a tripartite complex with dynein and dynactin, acts an adapter linking the dynein motor complex and dynactin. Interacts with KIF1C. Interacts with RAB6A and RAB6B; interaction is specific to Rab6.

Its subcellular location is the cytoplasm. It is found in the cytoskeleton. It localises to the microtubule organizing center. The protein localises to the centrosome. Functionally, acts as an adapter protein linking the dynein motor complex to various cargos and converts dynein from a non-processive to a highly processive motor in the presence of dynactin. Facilitates the interaction between dynein and dynactin and activates dynein processivity (the ability to move along a microtubule for a long distance without falling off the track). Predominantly recruits 2 dyneins, which increases both the force and speed of the microtubule motor. Component of secretory vesicle machinery in developing neurons that acts as a regulator of neurite outgrowth. Regulates the secretory vesicle transport by controlling the accumulation of Rab6-containing secretory vesicles in the pericentrosomal region restricting anterograde secretory transport during the early phase of neuronal differentiation, thereby inhibiting neuritogenesis. This chain is BICD family-like cargo adapter 1 (bicdl1), found in Xenopus tropicalis (Western clawed frog).